Here is a 301-residue protein sequence, read N- to C-terminus: uncharacterized protein (301 aa).

The signal sequence occupies residues 1-28 (MFFREDKSVAFRLRSAALSGCATGQSDA).

This is an uncharacterized protein from Treponema pallidum (strain Nichols).